Consider the following 73-residue polypeptide: uncharacterized protein (73 aa).

This is an uncharacterized protein from Dictyostelium discoideum (Social amoeba).